Here is a 205-residue protein sequence, read N- to C-terminus: Thymidylate kinase (205 aa).

Position 11–18 (11–18 (GPEGSGKT)) interacts with ATP.

This sequence belongs to the thymidylate kinase family.

It catalyses the reaction dTMP + ATP = dTDP + ADP. Phosphorylation of dTMP to form dTDP in both de novo and salvage pathways of dTTP synthesis. The polypeptide is Thymidylate kinase (Clostridium novyi (strain NT)).